The sequence spans 410 residues: Formyl-CoA:oxalate CoA-transferase (410 aa).

CoA contacts are provided by residues 18–19, 72–75, 96–98, Arg104, and 136–139; these read QS, LNTK, NFG, and KAYE. Asp168 acts as the Nucleophile in catalysis. The disordered stretch occupies residues 221–245; the sequence is PLAEYPNEDFGDEVPRSGNASGGGQ. Residue 243–245 participates in substrate binding; it reads GGQ.

The protein belongs to the CoA-transferase III family. Frc subfamily. In terms of assembly, homodimer.

It catalyses the reaction formyl-CoA + oxalate = oxalyl-CoA + formate. It participates in metabolic intermediate degradation; oxalate degradation; CO(2) and formate from oxalate: step 1/2. In terms of biological role, involved in the catabolism of oxalate and in the adapatation to low pH via the induction of the oxalate-dependent acid tolerance response (ATR). Catalyzes the transfer of the CoA moiety from formyl-CoA to oxalate. The chain is Formyl-CoA:oxalate CoA-transferase from Streptomyces coelicolor (strain ATCC BAA-471 / A3(2) / M145).